The sequence spans 133 residues: 14 kDa fatty acid-binding protein (133 aa).

Residues R107 and 127 to 129 (RNY) each bind (5Z,8Z,11Z,14Z)-eicosatetraenoate. Residues R107 and 127 to 129 (RNY) each bind (9Z)-octadecenoate.

It belongs to the calycin superfamily. Fatty-acid binding protein (FABP) family. Tubercles, muscle layers and body.

The protein localises to the cytoplasm. Its function is as follows. May play a role in the transport of fatty acids. Binds various fatty acids, such as arachidonic, oleic, palmitic and linolenic acid (in vitro). The polypeptide is 14 kDa fatty acid-binding protein (Schistosoma mansoni (Blood fluke)).